A 457-amino-acid polypeptide reads, in one-letter code: UDP-N-acetylmuramoyl-tripeptide--D-alanyl-D-alanine ligase (457 aa).

Position 113-119 (113-119 (GSNGKTT)) interacts with ATP.

This sequence belongs to the MurCDEF family. MurF subfamily.

It is found in the cytoplasm. It catalyses the reaction D-alanyl-D-alanine + UDP-N-acetyl-alpha-D-muramoyl-L-alanyl-gamma-D-glutamyl-meso-2,6-diaminopimelate + ATP = UDP-N-acetyl-alpha-D-muramoyl-L-alanyl-gamma-D-glutamyl-meso-2,6-diaminopimeloyl-D-alanyl-D-alanine + ADP + phosphate + H(+). It participates in cell wall biogenesis; peptidoglycan biosynthesis. Involved in cell wall formation. Catalyzes the final step in the synthesis of UDP-N-acetylmuramoyl-pentapeptide, the precursor of murein. This is UDP-N-acetylmuramoyl-tripeptide--D-alanyl-D-alanine ligase from Bacillus subtilis (strain 168).